Consider the following 224-residue polypeptide: Protein FMP52, mitochondrial (224 aa).

This sequence belongs to the FMP52 family.

The protein resides in the mitochondrion outer membrane. The polypeptide is Protein FMP52, mitochondrial (FMP52) (Kluyveromyces lactis (strain ATCC 8585 / CBS 2359 / DSM 70799 / NBRC 1267 / NRRL Y-1140 / WM37) (Yeast)).